A 232-amino-acid chain; its full sequence is Large ribosomal subunit protein uL1 (232 aa).

Belongs to the universal ribosomal protein uL1 family. Part of the 50S ribosomal subunit.

Functionally, binds directly to 23S rRNA. The L1 stalk is quite mobile in the ribosome, and is involved in E site tRNA release. In terms of biological role, protein L1 is also a translational repressor protein, it controls the translation of the L11 operon by binding to its mRNA. This is Large ribosomal subunit protein uL1 from Sinorhizobium fredii (strain NBRC 101917 / NGR234).